The chain runs to 73 residues: Exodeoxyribonuclease 7 small subunit (73 aa).

Belongs to the XseB family. In terms of assembly, heterooligomer composed of large and small subunits.

The protein resides in the cytoplasm. It carries out the reaction Exonucleolytic cleavage in either 5'- to 3'- or 3'- to 5'-direction to yield nucleoside 5'-phosphates.. Its function is as follows. Bidirectionally degrades single-stranded DNA into large acid-insoluble oligonucleotides, which are then degraded further into small acid-soluble oligonucleotides. The chain is Exodeoxyribonuclease 7 small subunit from Streptococcus mutans serotype c (strain ATCC 700610 / UA159).